Reading from the N-terminus, the 331-residue chain is DNA fragmentation factor subunit alpha (331 aa).

An N-acetylmethionine modification is found at M1. One can recognise a CIDE-N domain in the interval 17–96; it reads PLKPCLLRRN…ALACNEKWIY (80 aa). Residue T243 is modified to Phosphothreonine. Residues 306-331 form a disordered region; that stretch reads LRNLSARRSPLPGEPQRPKRAKRDSS.

As to quaternary structure, heterodimer of DFFA and DFFB. Post-translationally, caspase-3 cleaves DFF45 at 2 sites to generate an active factor.

It localises to the cytoplasm. Its function is as follows. Inhibitor of the caspase-activated DNase (DFF40). This Mus musculus (Mouse) protein is DNA fragmentation factor subunit alpha (Dffa).